We begin with the raw amino-acid sequence, 96 residues long: RING finger protein Z (96 aa).

Over residues 1-10 the composition is skewed to basic and acidic residues; the sequence is MGNCRSKQES. Residues 1–21 form a disordered region; sequence MGNCRSKQESHPICPNTQTPE. Residue Gly2 is the site of N-myristoyl glycine; by host attachment. The segment at 41-77 adopts an RING-type; atypical zinc-finger fold; the sequence is CKCCWFADRNLINCSDHYLCLRCLNVMLRTSNLCNIC. Residues 91–94 carry the PTAP/PSAP motif motif; that stretch reads PTAP.

This sequence belongs to the arenaviridae Z protein family. As to quaternary structure, interacts with protein NP; this interaction probably directs the encapsidated genome to budding sites. Interacts (via RING domain) with polymerase L; this interaction inhibits viral transcription and replication, Z partially blocks the product exit tunnel for the releasing nascent RNA product. Interacts with the glycoprotein complex; this interaction plays a role in virion budding. Interacts with host eIF4E; this interaction results in eIF4E reduced affinity for its substrate, the 5'-m7 G cap structure. Interacts (via late-budding domain) with host TSG101; this interaction is essential for budding and release of viral particles. Interacts with host RPLP0; this interaction may serve to load ribosome-like particles inside the virion. Interacts with host PML; this interaction induces PML bodies redistribution in the cytoplasm upon viral infection. In terms of processing, myristoylation is required for the role of RING finger protein Z in assembly and budding.

It localises to the virion. It is found in the host cytoplasm. The protein resides in the host perinuclear region. The protein localises to the host cell membrane. Functionally, plays a crucial role in virion assembly and budding. Expressed late in the virus life cycle, it acts as an inhibitor of viral transcription and RNA synthesis by interacting with the viral polymerase L. Presumably recruits the NP encapsidated genome to cellular membranes at budding sites via direct interaction with NP. Plays critical roles in the final steps of viral release by interacting with host TSG101, a member of the vacuolar protein-sorting pathway and using other cellular host proteins involved in vesicle formation pathway. The budding of the virus progeny occurs after association of protein Z with the viral glycoprotein complex SSP-GP1-GP2 at the cell periphery, step that requires myristoylation of protein Z. Also selectively represses protein production by associating with host eIF4E. In cell-based minigenome assay, has an inhibitory effect on the ribonucleoprotein machinery (vRNP), which is responsible for the replication and transcription of the viral genome. In Hylaeamys megacephalus (Large-headed rice rat), this protein is RING finger protein Z.